Consider the following 434-residue polypeptide: ATP-dependent protease ATPase subunit HslU (434 aa).

ATP is bound by residues Ile-18, 60 to 65, Asp-247, Glu-312, and Arg-384; that span reads GVGKTE.

Belongs to the ClpX chaperone family. HslU subfamily. In terms of assembly, a double ring-shaped homohexamer of HslV is capped on each side by a ring-shaped HslU homohexamer. The assembly of the HslU/HslV complex is dependent on binding of ATP.

Its subcellular location is the cytoplasm. In terms of biological role, ATPase subunit of a proteasome-like degradation complex; this subunit has chaperone activity. The binding of ATP and its subsequent hydrolysis by HslU are essential for unfolding of protein substrates subsequently hydrolyzed by HslV. HslU recognizes the N-terminal part of its protein substrates and unfolds these before they are guided to HslV for hydrolysis. The sequence is that of ATP-dependent protease ATPase subunit HslU from Brucella anthropi (strain ATCC 49188 / DSM 6882 / CCUG 24695 / JCM 21032 / LMG 3331 / NBRC 15819 / NCTC 12168 / Alc 37) (Ochrobactrum anthropi).